The sequence spans 287 residues: MQFLDFLIALLPALFWGSVVLINVFVGGGPYNQIRGTTLGALIVGLGLLITGFAKFNNPTVIIVGLISGALWAFGQANQLKSISLIGVSNTMPVSTGMQLVGTTLFSVIFLGEWSSMTQIIFGLIAMILLVTGVALTSLKAKNERQSDNPEFKKAMGILIVSTVGYVGFVVLGDIFGVGGTDALFFQSVGMAIGGFILSMNHKTSLKSTALNLLPGVIWGIGNLFMFYSQPKVGVATSFSLSQLLVIVSTLGGIFILGERKDRRQMTGIWVGIIIIVIAAIILGNLK.

The next 9 helical transmembrane spans lie at 7–29 (LIAL…VGGG), 34–56 (IRGT…FAKF), 58–75 (NPTV…WAFG), 114–136 (WSSM…GVAL), 156–178 (MGIL…IFGV), 183–202 (ALFF…SMNH), 209–228 (TALN…FMFY), 233–255 (VGVA…GGIF), and 267–286 (TGIW…LGNL).

This sequence belongs to the GRP transporter (TC 2.A.7.5) family.

The protein localises to the cell membrane. Its function is as follows. Involved in the uptake of glucose. The protein is Probable glucose uptake protein GlcU (glcU) of Staphylococcus aureus (strain MRSA252).